The following is a 448-amino-acid chain: Exodeoxyribonuclease 7 large subunit (448 aa).

This sequence belongs to the XseA family. In terms of assembly, heterooligomer composed of large and small subunits.

The protein localises to the cytoplasm. The enzyme catalyses Exonucleolytic cleavage in either 5'- to 3'- or 3'- to 5'-direction to yield nucleoside 5'-phosphates.. Functionally, bidirectionally degrades single-stranded DNA into large acid-insoluble oligonucleotides, which are then degraded further into small acid-soluble oligonucleotides. The sequence is that of Exodeoxyribonuclease 7 large subunit from Alcanivorax borkumensis (strain ATCC 700651 / DSM 11573 / NCIMB 13689 / SK2).